We begin with the raw amino-acid sequence, 446 residues long: Alkylglycerol monooxygenase (446 aa).

The next 2 helical transmembrane spans lie at 43–63 (ATVY…AWKG) and 110–130 (WDSP…YYWF). The 131-residue stretch at 118–248 (LTFLGVDFGY…LIIWDRMFGT (131 aa)) folds into the Fatty acid hydroxylase domain. The short motif at 131–135 (HRMAH) is the Histidine box-1 element. Positions 144-148 (HQTHH) match the Histidine box-2 motif. A helical membrane pass occupies residues 167–187 (YFSWMFYWPMAFCIPPSVFAV). The Histidine box-3 motif lies at 220 to 224 (HRVHH). 3 helical membrane passes run 339-359 (MMHF…KLIL), 362-382 (ATLL…GFIF), and 412-434 (VPYL…GLKA).

Belongs to the sterol desaturase family. TMEM195 subfamily. Requires Fe cation as cofactor.

It localises to the endoplasmic reticulum membrane. The catalysed reaction is 1-O-(1,2-saturated-alkyl)-sn-glycerol + (6R)-L-erythro-5,6,7,8-tetrahydrobiopterin + O2 = a 1-(1-hydroxyalkyl)-sn-glycerol + (6R)-L-erythro-6,7-dihydrobiopterin + H2O. In terms of biological role, glyceryl-ether monooxygenase that cleaves the O-alkyl bond of ether lipids. Ether lipids are essential components of brain membranes. The chain is Alkylglycerol monooxygenase (agmo) from Xenopus tropicalis (Western clawed frog).